The primary structure comprises 376 residues: 23S rRNA (uracil(747)-C(5))-methyltransferase RlmC (376 aa).

The [4Fe-4S] cluster site is built by Cys-3, Cys-11, Cys-14, and Cys-87. 4 residues coordinate S-adenosyl-L-methionine: Gln-212, Phe-241, Glu-262, and Asn-307. The Nucleophile role is filled by Cys-334.

This sequence belongs to the class I-like SAM-binding methyltransferase superfamily. RNA M5U methyltransferase family. RlmC subfamily.

It catalyses the reaction uridine(747) in 23S rRNA + S-adenosyl-L-methionine = 5-methyluridine(747) in 23S rRNA + S-adenosyl-L-homocysteine + H(+). Catalyzes the formation of 5-methyl-uridine at position 747 (m5U747) in 23S rRNA. The polypeptide is 23S rRNA (uracil(747)-C(5))-methyltransferase RlmC (Salmonella newport (strain SL254)).